The sequence spans 388 residues: Carbamoyl phosphate synthase small chain (388 aa).

Residues Met-1–Ala-194 are CPSase. L-glutamine contacts are provided by Ser-53, Gly-246, and Gly-248. The Glutamine amidotransferase type-1 domain maps to Lys-198 to Glu-387. Cys-276 functions as the Nucleophile in the catalytic mechanism. Residues Leu-277, Gln-280, Asn-318, Gly-320, and Phe-321 each coordinate L-glutamine. Catalysis depends on residues His-360 and Glu-362.

It belongs to the CarA family. As to quaternary structure, composed of two chains; the small (or glutamine) chain promotes the hydrolysis of glutamine to ammonia, which is used by the large (or ammonia) chain to synthesize carbamoyl phosphate. Tetramer of heterodimers (alpha,beta)4.

It carries out the reaction hydrogencarbonate + L-glutamine + 2 ATP + H2O = carbamoyl phosphate + L-glutamate + 2 ADP + phosphate + 2 H(+). The catalysed reaction is L-glutamine + H2O = L-glutamate + NH4(+). Its pathway is amino-acid biosynthesis; L-arginine biosynthesis; carbamoyl phosphate from bicarbonate: step 1/1. The protein operates within pyrimidine metabolism; UMP biosynthesis via de novo pathway; (S)-dihydroorotate from bicarbonate: step 1/3. Functionally, small subunit of the glutamine-dependent carbamoyl phosphate synthetase (CPSase). CPSase catalyzes the formation of carbamoyl phosphate from the ammonia moiety of glutamine, carbonate, and phosphate donated by ATP, constituting the first step of 2 biosynthetic pathways, one leading to arginine and/or urea and the other to pyrimidine nucleotides. The small subunit (glutamine amidotransferase) binds and cleaves glutamine to supply the large subunit with the substrate ammonia. The polypeptide is Carbamoyl phosphate synthase small chain (Ruegeria pomeroyi (strain ATCC 700808 / DSM 15171 / DSS-3) (Silicibacter pomeroyi)).